A 405-amino-acid chain; its full sequence is Putative polysaccharide ligase RT0347 (405 aa).

Helical transmembrane passes span 23–43, 77–97, 120–140, 156–178, 201–221, 227–247, 270–290, 322–342, 353–375, and 377–397; these read IAAT…ISFI, LFIA…NSLV, ILYL…LFFI, FGLY…VIII, ISDS…FILA, IFFK…PIIA, LFIW…GYGF, ILQI…CLVY, ISNF…MISY, and IWQT…KLLV.

It belongs to the O-antigen ligase family.

It is found in the membrane. The chain is Putative polysaccharide ligase RT0347 from Rickettsia typhi (strain ATCC VR-144 / Wilmington).